A 326-amino-acid chain; its full sequence is L-lactate dehydrogenase (326 aa).

39–60 (DVVTGMPEGKALDDSQATSIAD) lines the NAD(+) pocket. 3 residues coordinate substrate: Arg99, Asn131, and Arg162. An NAD(+)-binding site is contributed by Asn131. The active-site Proton acceptor is the His186.

It belongs to the LDH/MDH superfamily. LDH family. In terms of assembly, homotetramer.

It carries out the reaction (S)-lactate + NAD(+) = pyruvate + NADH + H(+). Its pathway is fermentation; pyruvate fermentation to lactate; (S)-lactate from pyruvate: step 1/1. This is L-lactate dehydrogenase from Toxoplasma gondii.